The chain runs to 131 residues: Small ribosomal subunit protein uS8 (131 aa).

This sequence belongs to the universal ribosomal protein uS8 family. In terms of assembly, part of the 30S ribosomal subunit. Contacts proteins S5 and S12.

Functionally, one of the primary rRNA binding proteins, it binds directly to 16S rRNA central domain where it helps coordinate assembly of the platform of the 30S subunit. The sequence is that of Small ribosomal subunit protein uS8 from Campylobacter jejuni (strain RM1221).